The sequence spans 335 residues: Glycerol-3-phosphate dehydrogenase [NAD(P)+] (335 aa).

2 residues coordinate NADPH: Trp-12 and Lys-106. Sn-glycerol 3-phosphate contacts are provided by Lys-106, Gly-136, and Ser-138. Residue Ala-140 coordinates NADPH. Lys-191, Asp-244, Ser-254, Arg-255, and Asn-256 together coordinate sn-glycerol 3-phosphate. Lys-191 functions as the Proton acceptor in the catalytic mechanism. Arg-255 is a binding site for NADPH. NADPH contacts are provided by Val-279 and Glu-281.

The protein belongs to the NAD-dependent glycerol-3-phosphate dehydrogenase family.

The protein localises to the cytoplasm. It carries out the reaction sn-glycerol 3-phosphate + NAD(+) = dihydroxyacetone phosphate + NADH + H(+). It catalyses the reaction sn-glycerol 3-phosphate + NADP(+) = dihydroxyacetone phosphate + NADPH + H(+). The protein operates within membrane lipid metabolism; glycerophospholipid metabolism. In terms of biological role, catalyzes the reduction of the glycolytic intermediate dihydroxyacetone phosphate (DHAP) to sn-glycerol 3-phosphate (G3P), the key precursor for phospholipid synthesis. The chain is Glycerol-3-phosphate dehydrogenase [NAD(P)+] from Fusobacterium nucleatum subsp. nucleatum (strain ATCC 25586 / DSM 15643 / BCRC 10681 / CIP 101130 / JCM 8532 / KCTC 2640 / LMG 13131 / VPI 4355).